A 214-amino-acid polypeptide reads, in one-letter code: Mexicain (214 aa).

Disulfide bonds link Cys22-Cys63, Cys56-Cys95, and Cys153-Cys200. The active site involves Cys25. Cys25 contributes to the E64 binding site. Active-site residues include His159 and Asn175.

The protein belongs to the peptidase C1 family. In terms of tissue distribution, expressed in latex.

Its subcellular location is the secreted. Cysteine protease. This Jacaratia mexicana (Wild papaya) protein is Mexicain.